The sequence spans 546 residues: Undecaprenyl phosphate-alpha-4-amino-4-deoxy-L-arabinose arabinosyl transferase (546 aa).

12 consecutive transmembrane segments (helical) span residues 6–26 (INLAVIVPLFFIMLYLLPLGL), 87–107 (AASAFSTLGAAFCLFLLVGRF), 113–133 (AWVTVSVFLSLFLVSNLGTYS), 177–197 (LLTKGFLALALPVIVVVPFMI), 208–228 (WGWWVMLVALIVTLPWALAIH), 260–280 (YYLPYLLLGTLPWLFLAPSAI), 289–309 (SPLLRYALLWALIPFIFFSAA), 313–333 (LVTYILPCMAPLAIILAQGII), 345–365 (IGSVINCAFFSLISVAVIVLF), 380–400 (PWLLVVVCGSWAVLAYISIKA), 410–430 (YMLMPLSLFLLAWAIIPNISI), and 450–467 (AILIADYPSTMSAFNWYF).

This sequence belongs to the glycosyltransferase 83 family.

It is found in the cell inner membrane. The catalysed reaction is 4-amino-4-deoxy-alpha-L-arabinopyranosyl di-trans,octa-cis-undecaprenyl phosphate + lipid IVA = lipid IIA + di-trans,octa-cis-undecaprenyl phosphate.. Its pathway is lipopolysaccharide metabolism; 4-amino-4-deoxy-beta-L-arabinose-lipid A biosynthesis. Its function is as follows. Catalyzes the transfer of the L-Ara4N moiety of the glycolipid undecaprenyl phosphate-alpha-L-Ara4N to lipid A. The modified arabinose is attached to lipid A and is required for resistance to polymyxin and cationic antimicrobial peptides. This is Undecaprenyl phosphate-alpha-4-amino-4-deoxy-L-arabinose arabinosyl transferase from Shewanella sediminis (strain HAW-EB3).